Reading from the N-terminus, the 104-residue chain is Phosphoribosyl-ATP pyrophosphatase (104 aa).

This sequence belongs to the PRA-PH family.

The protein localises to the cytoplasm. It carries out the reaction 1-(5-phospho-beta-D-ribosyl)-ATP + H2O = 1-(5-phospho-beta-D-ribosyl)-5'-AMP + diphosphate + H(+). It functions in the pathway amino-acid biosynthesis; L-histidine biosynthesis; L-histidine from 5-phospho-alpha-D-ribose 1-diphosphate: step 2/9. This chain is Phosphoribosyl-ATP pyrophosphatase, found in Methanocorpusculum labreanum (strain ATCC 43576 / DSM 4855 / Z).